We begin with the raw amino-acid sequence, 815 residues long: Patatin-like phospholipase domain-containing protein LELG_00944 (815 aa).

Residues 41–50 (VSTTAPTTPL) show a composition bias toward polar residues. Disordered regions lie at residues 41 to 105 (VSTT…PQLK) and 140 to 166 (SENLNPNSKRTKFAKSSKSSKSKSTSP). Residues 54–73 (LDMGDLSLLGGELGNGSDDV) show a composition bias toward low complexity. Residues 74–94 (VVGDDDDDDDDDDDDDDDDDD) are compositionally biased toward acidic residues. The span at 148–160 (KRTKFAKSSKSSK) shows a compositional bias: basic residues. The helical transmembrane segment at 185–205 (WPILTFVVIWVTILGFLYLAV) threads the bilayer. In terms of domain architecture, PNPLA spans 360 to 552 (LCLSGGACFA…RTDIPIDALN (193 aa)). The GXSXG signature appears at 391 to 395 (GTSGG). The active-site Nucleophile is serine 393. The active-site Proton acceptor is aspartate 539. A disordered region spans residues 753 to 815 (GSTLRDDDAD…LTKERRHTVY (63 aa)). Over residues 759–799 (DDADADVDEDDNEDEDEEDEDENDYEEYDVEDLDDPYESDA) the composition is skewed to acidic residues.

Belongs to the PLPL family.

Its subcellular location is the membrane. Probable lipid hydrolase. The chain is Patatin-like phospholipase domain-containing protein LELG_00944 from Lodderomyces elongisporus (strain ATCC 11503 / CBS 2605 / JCM 1781 / NBRC 1676 / NRRL YB-4239) (Yeast).